The chain runs to 189 residues: UPF0316 protein Sca_1484 (189 aa).

3 helical membrane-spanning segments follow: residues 8 to 28 (PWLM…CLTV), 40 to 60 (VAAA…GLVM), and 66 to 86 (FQNI…GMKI).

It belongs to the UPF0316 family.

It localises to the cell membrane. The protein is UPF0316 protein Sca_1484 of Staphylococcus carnosus (strain TM300).